Consider the following 124-residue polypeptide: MPTINQLVRKGRRDKVAKTKTAALKGSPQRRGVCTRVYTTTPKKPNSALRKVARVRLTSQVEVTAYIPGEGHNLQEHSMVLVRGGRVKDLPGVRYKIIRGSLDTQGVKNRKQARSRYGAKKEKS.

2 disordered regions span residues Arg-9–Gly-32 and Gln-105–Ser-124. Basic residues predominate over residues Lys-108–Gly-118.

This sequence belongs to the universal ribosomal protein uS12 family. In terms of assembly, part of the 30S ribosomal subunit. Contacts proteins S8 and S17. May interact with IF1 in the 30S initiation complex.

In terms of biological role, with S4 and S5 plays an important role in translational accuracy. Functionally, interacts with and stabilizes bases of the 16S rRNA that are involved in tRNA selection in the A site and with the mRNA backbone. Located at the interface of the 30S and 50S subunits, it traverses the body of the 30S subunit contacting proteins on the other side and probably holding the rRNA structure together. The combined cluster of proteins S8, S12 and S17 appears to hold together the shoulder and platform of the 30S subunit. The protein is Small ribosomal subunit protein uS12 of Nocardia farcinica (strain IFM 10152).